Consider the following 280-residue polypeptide: Golgi phosphoprotein 3-like A (280 aa).

The segment at Met1–Glu32 is disordered. Residues Arg10–Glu32 show a composition bias toward basic and acidic residues. A 1,2-diacyl-sn-glycero-3-phospho-(1D-myo-inositol 4-phosphate) contacts are provided by Trp62, Arg71, Arg152, and Arg155. Residues Glu171–Thr182 are beta-hairpin required for oligomerization.

It belongs to the GOLPH3/VPS74 family. As to quaternary structure, homooligomer.

Its subcellular location is the golgi apparatus. The protein localises to the golgi stack membrane. It localises to the trans-Golgi network membrane. Functionally, phosphatidylinositol-4-phosphate-binding protein that may play a role in the process of vesicle budding at the Golgi and anterograde transport to the plasma membrane. This chain is Golgi phosphoprotein 3-like A (golph3l-a), found in Xenopus laevis (African clawed frog).